A 209-amino-acid chain; its full sequence is NDR1/HIN1-like protein 1 (209 aa).

Residues 18–38 (IFWSIIFVLFIIFLTILLIWA) traverse the membrane as a helical segment. N-linked (GlcNAc...) asparagine glycosylation is present at N58.

As to expression, expressed in rosette leaves, cauline leaves, stems, and siliques, and at lower levels in roots and flowers.

It is found in the cell membrane. Functionally, may play a role in plant immunity. This Arabidopsis thaliana (Mouse-ear cress) protein is NDR1/HIN1-like protein 1.